Consider the following 363-residue polypeptide: MASSHVAGVEIAEAVPLAPLTTLRIGPVARRMLTCTSTEQLIGVLRALTADDEPLLILAGGSNVVLADDLTDLTVVRIANTEITVDGDRVRAEAGALWDDVVVTSLAHGLGGLECLSGIPGSAGATPVQNVGAYGAEVADTITRVRLLDRRTGEDRWATTEELRFGYRTSVLKHSDAVIVLEVEFGLDAAGRSAPVRYRELATALGVEPGERTDPLRVRDAVLRLRTGKGMVVDPDPDHPDHDTWSVGSFFTNPVVTHADFERVERIARDAGAGPVPNYPAPDGVKLAAGWLVERAGFGKGYPGEGARARLSTKHALALTNRGQATTADVMALAGTVRAGVLDVFGIELTPEPILLGCVLSVP.

The FAD-binding PCMH-type domain maps to 25-201; that stretch reads IGPVARRMLT…RSAPVRYREL (177 aa). Residue Arg168 is part of the active site. The Proton donor role is filled by Ser249. The active site involves Glu352.

The protein belongs to the MurB family. It depends on FAD as a cofactor.

The protein resides in the cytoplasm. The catalysed reaction is UDP-N-acetyl-alpha-D-muramate + NADP(+) = UDP-N-acetyl-3-O-(1-carboxyvinyl)-alpha-D-glucosamine + NADPH + H(+). The protein operates within cell wall biogenesis; peptidoglycan biosynthesis. Functionally, cell wall formation. This is UDP-N-acetylenolpyruvoylglucosamine reductase from Mycolicibacterium smegmatis (strain ATCC 700084 / mc(2)155) (Mycobacterium smegmatis).